We begin with the raw amino-acid sequence, 538 residues long: ATP synthase subunit beta, mitochondrial (538 aa).

215–222 (GGAGVGKT) provides a ligand contact to ATP.

Belongs to the ATPase alpha/beta chains family. Subunit of the F-type ATPase which has 2 components, CF(1) - the catalytic core - and CF(0) - the membrane proton channel. Interacts (via N-terminus) with lov-1 (via PLAT domain). In terms of tissue distribution, expressed in three categories of adult male sensory neurons: tail ray B neurons, HOB hook neuron and head cephalic (CEM) neurons.

It is found in the cell projection. The protein localises to the cilium. The protein resides in the mitochondrion. Its subcellular location is the mitochondrion inner membrane. The enzyme catalyses ATP + H2O + 4 H(+)(in) = ADP + phosphate + 5 H(+)(out). In terms of biological role, mitochondrial membrane ATP synthase (F(1)F(0) ATP synthase or Complex V) produces ATP from ADP in the presence of a proton gradient across the membrane which is generated by electron transport complexes of the respiratory chain. F-type ATPases consist of two structural domains, F(1) - containing the extramembraneous catalytic core, and F(0) - containing the membrane proton channel, linked together by a central stalk and a peripheral stalk. During catalysis, ATP synthesis in the catalytic domain of F(1) is coupled via a rotary mechanism of the central stalk subunits to proton translocation. Subunits alpha and beta form the catalytic core in F(1). Rotation of the central stalk against the surrounding subunits leads to hydrolysis of ATP in three separate catalytic sites on the beta subunits. Required during male mating behavior for the response to hermaphrodite contact, acting with lov-1 and pkd-2. May be involved in polycystin signaling. This is ATP synthase subunit beta, mitochondrial from Caenorhabditis elegans.